Reading from the N-terminus, the 337-residue chain is Hsp90 co-chaperone Cdc37-like 1 (337 aa).

Residues 1-11 are compositionally biased toward pro residues; it reads MEQPWPPPGPW. The interval 1-40 is disordered; it reads MEQPWPPPGPWSLPRAEGEAEEESDFDVFPSSPRCPQLPG. The segment at 2–171 is self-association; the sequence is EQPWPPPGPW…YEQKIRHFGM (170 aa). A phosphoserine mark is found at S32 and S88. Positions 84-122 form a coiled coil; the sequence is HNSESLDQEHAKAQTAVSELRQREEEWRQKEEALVQREK. A self-association and interaction with Hsp90 region spans residues 147 to 277; it reads KDTEDEDKSE…SRVRLYSQSQ (131 aa). Residues 267–337 are interaction with Hsp70; that stretch reads KSRVRLYSQS…DDEPKMMDTV (71 aa). Residues 278 to 337 are required for interaction with STIP1; the sequence is SFQPMTVQNHVPHSGVGSIGLLESLPQNPDYLQYSISTALCSLNSVVHKEDDEPKMMDTV.

Belongs to the CDC37 family. In terms of assembly, self-associates. Forms complexes with Hsp70 and Hsp90. Interacts with CDC37, FKBP4, PPID and STIP1. As to expression, expressed in brain, heart, kidney, liver, placenta and skeletal muscle.

Its subcellular location is the cytoplasm. Co-chaperone that binds to numerous proteins and promotes their interaction with Hsp70 and Hsp90. The sequence is that of Hsp90 co-chaperone Cdc37-like 1 (CDC37L1) from Homo sapiens (Human).